The primary structure comprises 363 residues: Flagellar P-ring protein (363 aa).

The N-terminal stretch at 1–20 (MKCKLIFAVFMLAFSMPSQA) is a signal peptide.

The protein belongs to the FlgI family. The basal body constitutes a major portion of the flagellar organelle and consists of four rings (L,P,S, and M) mounted on a central rod.

The protein localises to the periplasm. It localises to the bacterial flagellum basal body. In terms of biological role, assembles around the rod to form the L-ring and probably protects the motor/basal body from shearing forces during rotation. In Shewanella oneidensis (strain ATCC 700550 / JCM 31522 / CIP 106686 / LMG 19005 / NCIMB 14063 / MR-1), this protein is Flagellar P-ring protein.